Consider the following 341-residue polypeptide: MTEQQPVAVLGGGSFGTAVANLLAENGHPVRQWMRDPAQAESMRVNRENPRYLKGIRLHDGVQPVNDLLATLQGSELIFVALPSSALRSVLAPHAELLRGKGLVSLTKGIEAHTFKLMSQILEEIAPEARIGVLSGPNLAREIAEHALTATVVASEDEALCRQVQEVLHGRTFRVYASTDRFGVELGGALKNVYAIIAGMAVALGMGENTKSMLITRALAEMTRFAVSQGANPMTFLGLAGVGDLIVTCSSPKSRNYQVGHALGQGLTLEEAVSRLGEVAEGVNTLKVLKAKAQEVQVYMPLVAGLHAILFEGRTLNQVIEHLMRAEPKTDVDFISTSGFN.

NADPH-binding residues include Ser14, Phe15, Arg35, and Lys108. Residues Lys108 and Gly136 each coordinate sn-glycerol 3-phosphate. Ala140 serves as a coordination point for NADPH. Sn-glycerol 3-phosphate-binding residues include Lys191, Asp244, Ser254, Arg255, and Asn256. Lys191 (proton acceptor) is an active-site residue. An NADPH-binding site is contributed by Arg255. NADPH contacts are provided by Val279 and Glu281.

It belongs to the NAD-dependent glycerol-3-phosphate dehydrogenase family.

It is found in the cytoplasm. The catalysed reaction is sn-glycerol 3-phosphate + NAD(+) = dihydroxyacetone phosphate + NADH + H(+). It carries out the reaction sn-glycerol 3-phosphate + NADP(+) = dihydroxyacetone phosphate + NADPH + H(+). The protein operates within membrane lipid metabolism; glycerophospholipid metabolism. Its function is as follows. Catalyzes the reduction of the glycolytic intermediate dihydroxyacetone phosphate (DHAP) to sn-glycerol 3-phosphate (G3P), the key precursor for phospholipid synthesis. The sequence is that of Glycerol-3-phosphate dehydrogenase [NAD(P)+] from Pseudomonas entomophila (strain L48).